The primary structure comprises 463 residues: Asparagine--tRNA ligase (463 aa).

Belongs to the class-II aminoacyl-tRNA synthetase family. As to quaternary structure, homodimer.

Its subcellular location is the cytoplasm. It catalyses the reaction tRNA(Asn) + L-asparagine + ATP = L-asparaginyl-tRNA(Asn) + AMP + diphosphate + H(+). This Alkaliphilus metalliredigens (strain QYMF) protein is Asparagine--tRNA ligase.